The chain runs to 630 residues: Chaperone protein HtpG (630 aa).

Residues methionine 1–arginine 343 are a; substrate-binding. The b stretch occupies residues glutamate 344 to glutamine 554. The c stretch occupies residues isoleucine 555–isoleucine 630.

The protein belongs to the heat shock protein 90 family. As to quaternary structure, homodimer.

It localises to the cytoplasm. In terms of biological role, molecular chaperone. Has ATPase activity. In Sulfurimonas denitrificans (strain ATCC 33889 / DSM 1251) (Thiomicrospira denitrificans (strain ATCC 33889 / DSM 1251)), this protein is Chaperone protein HtpG.